A 463-amino-acid chain; its full sequence is Hexose-6-phosphate:phosphate antiporter (463 aa).

The Cytoplasmic portion of the chain corresponds to 1-24 (MLAFLNQVRKPTLDLPLDVRRKMW). A helical transmembrane segment spans residues 25 to 45 (FKPFMQSYLVVFIGYLTMYLI). At 46 to 60 (RKNFNIAQNDMISTY) the chain is on the periplasmic side. A helical membrane pass occupies residues 61–81 (GLSMTELGMIGLGFSITYGVG). The Cytoplasmic segment spans residues 82-96 (KTLVSYYADGKNTKQ). Residues 97–117 (FLPFMLILSAICMLGFSASMG) traverse the membrane as a helical segment. Residues 118–122 (AGSTS) are Periplasmic-facing. Residues 123–143 (LFLMIAFYALSGFFQSTGGSC) form a helical membrane-spanning segment. Residues 144–159 (SYSTITKWTPRRKRGT) are Cytoplasmic-facing. Residues 160 to 180 (FLGFWNISHNLGGAGAAGVAL) form a helical membrane-spanning segment. Topologically, residues 181 to 189 (FGANYLFDG) are periplasmic. The chain crosses the membrane as a helical span at residues 190–210 (HVIGMFIFPSIIALIVGFIGL). At 211-259 (RFGSDSPESYGLGKAEELFGEEISEEDKETEENEMTKWQIFVEYVLKNK) the chain is on the cytoplasmic side. Residues 260–280 (VIWLLCFSNIFLYVVRIGIDQ) form a helical membrane-spanning segment. The Periplasmic portion of the chain corresponds to 281-297 (WSTVYAFQELKLSKEVA). Residues 298–318 (IQGFTLFEVGALVGTLLWGWL) form a helical membrane-spanning segment. Residues 319–326 (SDLANGRR) lie on the Cytoplasmic side of the membrane. Residues 327 to 347 (ALVACVALALIIATLGVYQHA) traverse the membrane as a helical segment. The Periplasmic portion of the chain corresponds to 348 to 357 (SNQYVYLASL). A helical membrane pass occupies residues 358–378 (FALGFLVFGPQLLIGVAAVGF). Topologically, residues 379-382 (VPKK) are cytoplasmic. The chain crosses the membrane as a helical span at residues 383-403 (AIGAADGIKGTFAYLIGDSFA). The Periplasmic portion of the chain corresponds to 404-425 (KLGLGMIADGTPVFGLTGWAGT). Residues 426–446 (FAALDAAAIGCICLMAMVAVM) traverse the membrane as a helical segment. The Cytoplasmic segment spans residues 447-463 (EERKIRREKKIQQVNIA).

This sequence belongs to the major facilitator superfamily. Organophosphate:Pi antiporter (OPA) (TC 2.A.1.4) family.

It is found in the cell inner membrane. Its function is as follows. Mediates the exchange of external hexose 6-phosphate and internal inorganic phosphate. The protein is Hexose-6-phosphate:phosphate antiporter (uhpT) of Salmonella typhimurium (strain LT2 / SGSC1412 / ATCC 700720).